The sequence spans 88 residues: Small ribosomal subunit protein bS20 (88 aa).

This sequence belongs to the bacterial ribosomal protein bS20 family.

Binds directly to 16S ribosomal RNA. This chain is Small ribosomal subunit protein bS20, found in Desulforamulus reducens (strain ATCC BAA-1160 / DSM 100696 / MI-1) (Desulfotomaculum reducens).